Consider the following 479-residue polypeptide: Baeyer-Villiger monooxygenase AacuH (479 aa).

Residues 14 to 34 are disordered; that stretch reads DSLGHPDGASRPPVSAESLSR.

The protein belongs to the AflY oxidoreductase family.

The protein operates within secondary metabolite biosynthesis. In terms of biological role, baeyer-Villiger monooxygenase; part of the gene cluster that mediates the biosynthesis of the tetrahydroxanthone dimer secalonic acid D. The pathway begins with the synthesis of atrochrysone thioester by the polyketide synthase AacuL. The atrochrysone carboxyl ACP thioesterase AacuM then breaks the thioester bond and releases the atrochrysone carboxylic acid from AacuL. Atrochrysone carboxylic acid is decarboxylated by the decarboxylase AacuI, and oxidized by the anthrone oxygenase AacuG to yield emodin. Emodin is then reduced to emodin hydroquinone by a yet unidentified oxidoreductase. A-ring reduction by the short chain dehydrogenase AacuN, dehydration by the scytalone dehydratase-like protein AacuK and probable spontaneous re-oxidation, results in overall deoxygenation to chrysophanol. Baeyer-Villiger oxidation by the Baeyer-Villiger monooxygenase (BVMO) AacuH then yields monodictyphenone. Monodictyphenone is transformed into compounds with the tetrahydroxanthone skeleton via methylesterification by the methyltransferase AacuQ, followed by the action of the flavin-dependent monooxygenase AacuC, the isomerase AacuP, and the short chain dehydrogenase/reductase AacuF or AacuD. AacuF and AacuD should accept the same compound as a substrate but perform the ketoreduction with a different stereoselectivity, thus yielding blennolides B and A, respectively. In the final step of the biosynthesis, the cytochrome P450 monooxygenase AacuE accepts blennolide B and/or blennolide A to conduct the dimerization reaction to furnish the tetrahydroxanthone dimers, secalonic acids D, B, and F. This is Baeyer-Villiger monooxygenase AacuH from Aspergillus aculeatus (strain ATCC 16872 / CBS 172.66 / WB 5094).